Reading from the N-terminus, the 263-residue chain is Virulence plasmid protein pGP6-D-related protein (263 aa).

It belongs to the UPF0137 (pGP6-D) family.

The chain is Virulence plasmid protein pGP6-D-related protein from Chlamydia trachomatis serovar D (strain ATCC VR-885 / DSM 19411 / UW-3/Cx).